The chain runs to 138 residues: Protein FAM136A (138 aa).

Ala-2 is modified (N-acetylalanine). Thr-124 and Thr-126 each carry phosphothreonine.

Belongs to the FAM136 family.

The protein is Protein FAM136A (Fam136a) of Rattus norvegicus (Rat).